The sequence spans 145 residues: Peroxide operon regulator (145 aa).

The interval 1–78 (MAAHELKEAL…SGLVKELTYG (78 aa)) is DNA-binding. Residues Cys96, Cys99, Cys136, and Cys139 each contribute to the Zn(2+) site.

The protein belongs to the Fur family. Homodimer. Mn(2+) is required as a cofactor. The cofactor is Fe(2+). Requires Zn(2+) as cofactor. Post-translationally, possibly oxidized on a cysteine residue; the Cys-SOH formed in response to oxidative signaling may rapidly react with a Cys-SH to form a disulfide bond, leading to the loss of metal ion and inactivation of repressor function. Oxidized PerR can be further reduced by thiol reductants and repressor activity restored.

The protein resides in the cytoplasm. Hydrogen and organic peroxide sensor. Represses the expression of a regulon of peroxide-inducible genes such as katA, ahpC, ahpF, the heme biosynthesis operon (hemAXCDBL), fur, perR, zosA and mrgA. The sequence is that of Peroxide operon regulator (perR) from Bacillus subtilis (strain 168).